The chain runs to 268 residues: Indole-3-glycerol phosphate synthase (268 aa).

Belongs to the TrpC family.

The catalysed reaction is 1-(2-carboxyphenylamino)-1-deoxy-D-ribulose 5-phosphate + H(+) = (1S,2R)-1-C-(indol-3-yl)glycerol 3-phosphate + CO2 + H2O. Its pathway is amino-acid biosynthesis; L-tryptophan biosynthesis; L-tryptophan from chorismate: step 4/5. This chain is Indole-3-glycerol phosphate synthase, found in Parafrankia sp. (strain EAN1pec).